We begin with the raw amino-acid sequence, 2240 residues long: Death-inducer obliterator 1 (2240 aa).

Met-1 carries the N-acetylmethionine modification. Over residues 1–25 the composition is skewed to basic and acidic residues; sequence MDDKGDPSNEEAPKAIKPTSKEFRK. The interval 1–259 is disordered; the sequence is MDDKGDPSNE…EPGDLGRPKP (259 aa). Phosphoserine occurs at positions 60 and 114. A compositionally biased stretch (polar residues) spans 111–130; that stretch reads SEGSVESASETRSGPQSAST. A compositionally biased stretch (basic and acidic residues) spans 132–146; it reads VKERPASSEKVKGGD. Positions 147-156 are enriched in acidic residues; that stretch reads DHDDTSDSDS. Residue Thr-151 is modified to Phosphothreonine. Residues Ser-152 and Ser-154 each carry the phosphoserine modification. 2 consecutive short sequence motifs (nuclear localization signal) follow at residues 165 to 173 and 185 to 193; these read QNRLRRKRE and QSRLRKKRR. The segment covering 172-181 has biased composition (basic and acidic residues); the sequence is REQEPTERPL. Positions 230–246 are enriched in basic and acidic residues; it reads GKDDRESKLEGKAAQDI. A Glycyl lysine isopeptide (Lys-Gly) (interchain with G-Cter in SUMO2) cross-link involves residue Lys-247. A PHD-type zinc finger spans residues 268–322; it reads ALYCICRQPHNNRFMICCDRCEEWFHGDCVGISEARGRLLERNGEDYICPNCTIL. 9 disordered regions span residues 431–456, 501–567, 584–618, 773–826, 860–947, 1013–1045, 1206–1427, 1453–1472, and 1517–2240; these read SGKE…PKCG, STPS…RNLV, KKPP…GPAP, RPAR…EKST, VPSA…EDLS, LAKP…PEGD, GELD…VAYD, RRNS…TPSL, and SDAL…ASQA. Basic and acidic residues predominate over residues 433–451; it reads KEQKPKPKEKMKMKPEKPS. The span at 501 to 510 shows a compositional bias: polar residues; it reads STPSWASDHN. Position 523 is a phosphoserine (Ser-523). The span at 530–541 shows a compositional bias: basic and acidic residues; it reads STKEDRRSEEKA. Composition is skewed to low complexity over residues 542 to 551 and 604 to 618; these read AAMAASKKTA and PSSG…GPAP. The TFIIS central domain maps to 670 to 790; sequence IRQNIRRSLK…SRTKLHNESK (121 aa). Residues 773–791 show a composition bias toward basic and acidic residues; that stretch reads RPARSVMESRTKLHNESKK. The span at 800 to 815 shows a compositional bias: acidic residues; sequence PDLEDSPPVSDSEEQQ. Phosphoserine is present on residues Ser-805 and Ser-809. Over residues 878-890 the composition is skewed to basic and acidic residues; the sequence is VKKEDLKSKHDSS. Residue Lys-879 forms a Glycyl lysine isopeptide (Lys-Gly) (interchain with G-Cter in SUMO2) linkage. A phosphoserine mark is found at Ser-889 and Ser-898. Over residues 930–941 the composition is skewed to pro residues; the sequence is PGPPGDGHPEPS. Ser-1019, Ser-1030, and Ser-1040 each carry phosphoserine. The segment covering 1207-1220 has biased composition (basic and acidic residues); sequence ELDKMDEKRTRLQP. Tyr-1244 bears the Phosphotyrosine mark. Thr-1256 carries the phosphothreonine modification. The span at 1258 to 1271 shows a compositional bias: pro residues; that stretch reads PGSPPPPPPLPEPP. Residues Ser-1260 and Ser-1312 each carry the phosphoserine modification. Low complexity predominate over residues 1276–1313; it reads LSSLKPAAPSPATAATTAAAASTAASSTASSASKTASP. Acidic residues predominate over residues 1376–1392; that stretch reads LEEEEDDRPYDPEEEYD. A compositionally biased stretch (basic and acidic residues) spans 1393–1424; it reads PERAFDTQLVERGRRHEVERAPEAAAAEREEV. A Phosphoserine modification is found at Ser-1456. Position 1469 is a phosphothreonine (Thr-1469). 2 positions are modified to phosphoserine: Ser-1522 and Ser-1714. A compositionally biased stretch (pro residues) spans 1771–1782; the sequence is FPGPRGPAPPFP. Arg-1835 is modified (omega-N-methylarginine). A compositionally biased stretch (basic and acidic residues) spans 1842 to 1856; that stretch reads FEERKDPHGEKREFQ. Asymmetric dimethylarginine is present on residues Arg-1893, Arg-1894, Arg-1977, Arg-1982, Arg-1993, Arg-2008, and Arg-2024. The segment covering 2044–2059 has biased composition (low complexity); the sequence is AGPPSALSSSAPGQGP. 2 stretches are compositionally biased toward basic and acidic residues: residues 2069–2101 and 2109–2230; these read DFRE…KPLE and ASED…EASR.

In terms of assembly, interacts specifically (via PHD-type zinc finger) with histone H3 that is trimethylated at 'Lys-4' (H3K4me3), histone phosphorylation at 'Thr-3' or 'Thr-6' disrupts this binding and promotes translocation of DIDO1 from chromatin to the mitotic spindle during mitosis. In terms of tissue distribution, ubiquitous.

Its subcellular location is the cytoplasm. It localises to the nucleus. It is found in the cytoskeleton. The protein localises to the spindle. In terms of biological role, putative transcription factor, weakly pro-apoptotic when overexpressed. Tumor suppressor. Required for early embryonic stem cell development. Functionally, displaces isoform 4 at the onset of differentiation, required for repression of stemness genes. The sequence is that of Death-inducer obliterator 1 (DIDO1) from Homo sapiens (Human).